We begin with the raw amino-acid sequence, 450 residues long: Phosphopentomutase (450 aa).

Serine 93 acts as the Phosphoserine intermediate in catalysis. Mg(2+) is bound by residues serine 93, aspartate 231, aspartate 233, and aspartate 235. Serine 93 carries the post-translational modification Phosphoserine; by autocatalysis.

This sequence belongs to the phosphohexose mutase family. As to quaternary structure, homotetramer. Mg(2+) serves as cofactor. Activated by phosphorylation.

It catalyses the reaction alpha-D-ribose 1-phosphate = D-ribose 5-phosphate. The enzyme catalyses 2-deoxy-alpha-D-ribose 1-phosphate = 2-deoxy-D-ribose 5-phosphate. Functionally, catalyzes the conversion of deoxyribose 1-phosphate to deoxyribose 5-phosphate. Also shows weak activity with glucose 1-phosphate and mannose 1-phosphate. Could be involved in pentose biosynthesis. The polypeptide is Phosphopentomutase (Thermococcus kodakarensis (strain ATCC BAA-918 / JCM 12380 / KOD1) (Pyrococcus kodakaraensis (strain KOD1))).